The chain runs to 184 residues: Casparian strip membrane protein 3 (184 aa).

The Cytoplasmic segment spans residues 1-24 (MEGSEEHGETSKAPLSRGVSKGVS). The helical transmembrane segment at 25-45 (ILDVILRFVAIIGTLASAIAM) threads the bilayer. Topologically, residues 46 to 72 (GTTNQTLPFFTQFIRFKAQYSDLPTLT) are extracellular. An N-linked (GlcNAc...) asparagine glycan is attached at N49. The chain crosses the membrane as a helical span at residues 73 to 93 (FFVVANSIVSAYLILSLPLSI). Topologically, residues 94 to 105 (VHVIRSRAKYSR) are cytoplasmic. The chain crosses the membrane as a helical span at residues 106-126 (LILIFFDAAMLALVTAGASAA). Over 127-159 (AAIVYLAHKGNARANWLAICQQFDSFCERISGS) the chain is Extracellular. Residues 160–180 (LIGSFAAMVVLVLLIFLSAIA) traverse the membrane as a helical segment. Over 181-184 (LARR) the chain is Cytoplasmic.

The protein belongs to the Casparian strip membrane proteins (CASP) family. Homodimer and heterodimers.

The protein resides in the cell membrane. Its function is as follows. Regulates membrane-cell wall junctions and localized cell wall deposition. Required for establishment of the Casparian strip membrane domain (CSD) and the subsequent formation of Casparian strips, a cell wall modification of the root endodermis that determines an apoplastic barrier between the intraorganismal apoplasm and the extraorganismal apoplasm and prevents lateral diffusion. This Oryza sativa subsp. indica (Rice) protein is Casparian strip membrane protein 3.